An 845-amino-acid polypeptide reads, in one-letter code: Complement component C7 (845 aa).

The signal sequence occupies residues 1 to 22 (MQVTSLLILVCFIAAFQVFSRA). The TSP type-1 1 domain occupies 27–80 (NCKWDSYGPWSECNGCTKTQTRRRSVAVYGQYGGYPCEGSAFETQSCKPERGCP). 6 disulfides stabilise this stretch: Cys28–Cys63, Cys39–Cys73, Cys42–Cys79, Cys85–Cys96, Cys91–Cys109, and Cys103–Cys119. Residues 84–120 (GCGDRFRCFSGQCISKSLVCNGDPDCEEDGADEDKCE) form the LDL-receptor class A domain. The MACPF domain maps to 122–456 (VANPSCNIDK…EYFDEFDPCH (335 aa)). The N-linked (GlcNAc...) asparagine glycan is linked to Asn124. Cys127 and Cys164 are joined by a disulfide. Asn201 is a glycosylation site (N-linked (GlcNAc...) asparagine). Cystine bridges form between Cys336/Cys353, Cys433/Cys560, Cys455/Cys505, Cys457/Cys473, Cys460/Cys475, Cys477/Cys486, Cys512/Cys545, Cys523/Cys535, Cys571/Cys613, Cys599/Cys626, Cys631/Cys673, Cys659/Cys688, Cys703/Cys714, Cys716/Cys751, Cys722/Cys744, Cys729/Cys764, Cys774/Cys783, Cys777/Cys790, Cys792/Cys826, Cys798/Cys819, and Cys806/Cys839. Residues 457-487 (CRPCQNGGLAIVVETQCQCLCKPYTFGSACE) form the EGF-like domain. Residues 500–549 (DGGWNCWSSWSPCVQGKRTRSRECNNPPPRDDGKSCLGETTESKQCEDQD) enclose the TSP type-1 2 domain. 2 CCP regions span residues 545 to 615 (CEDQ…RCGE) and 616 to 693 (DLQW…QKAT). Sushi domains follow at residues 569 to 628 (EFCL…HCQK) and 629 to 690 (LACV…KCVQ). 2 factor I module (FIM) regions span residues 695–771 (TPPP…SPAE) and 772–844 (KVCG…EEAA). N-linked (GlcNAc...) asparagine glycosylation occurs at Asn755.

The protein belongs to the complement C6/C7/C8/C9 family. As to quaternary structure, monomer or dimer; as a C5b-7 complex it can also form multimeric rosettes. Component of the membrane attack complex (MAC), composed of complement C5b, C6, C7, C8A, C8B, C8G and multiple copies of the pore-forming subunit C9. C-, N- and O-glycosylated. O-glycosylated with core 1 or possibly core 8 glycans.

It is found in the secreted. The protein localises to the target cell membrane. Its activity is regulated as follows. Membrane attack complex (MAC) assembly is inhibited by CD59, thereby protecting self-cells from damage during complement activation. MAC assembly is also inhibited by clusterin (CLU) chaperones that inhibit polymerization of C9. In terms of biological role, component of the membrane attack complex (MAC), a multiprotein complex activated by the complement cascade, which inserts into a target cell membrane and forms a pore, leading to target cell membrane rupture and cell lysis. The MAC is initiated by proteolytic cleavage of C5 into complement C5b in response to the classical, alternative, lectin and GZMK complement pathways. The complement pathways consist in a cascade of proteins that leads to phagocytosis and breakdown of pathogens and signaling that strengthens the adaptive immune system. C7 serves as a membrane anchor. During MAC assembly, associates with C5b and C6 to form the C5b-7 complex, a key lipophilic precursor of the MAC complex, which associates with the outer leaflet and reduces the energy for membrane bending. The polypeptide is Complement component C7 (Mus musculus (Mouse)).